Consider the following 345-residue polypeptide: Platelet-derived growth factor C (345 aa).

An N-terminal signal peptide occupies residues 1–22 (MLLLGLLLLTSALAGQRTGTRA). Polar residues predominate over residues 24–33 (SNLSSKLQLS). Residues 24–45 (SNLSSKLQLSSDKEQNGVQDPR) form a disordered region. Asparagine 25 is a glycosylation site (N-linked (GlcNAc...) asparagine). The segment covering 34–45 (SDKEQNGVQDPR) has biased composition (basic and acidic residues). The CUB domain maps to 46–163 (HERVVTISGN…PGFCIHYSII (118 aa)). Residue asparagine 55 is glycosylated (N-linked (GlcNAc...) asparagine). 4 disulfides stabilise this stretch: cysteine 104–cysteine 124, cysteine 250–cysteine 294, cysteine 280–cysteine 335, and cysteine 287–cysteine 337.

It belongs to the PDGF/VEGF growth factor family. As to quaternary structure, homodimer; disulfide-linked. Interacts with PDGFRA homodimers, and with heterodimers formed by PDGFRA and PDGFRB. Interacts (via CUB domain) with PLAT (via kringle domain). Post-translationally, proteolytic removal of the N-terminal CUB domain releasing the core domain is necessary for unmasking the receptor-binding epitopes of the core domain. Cleavage after basic residues in the hinge region (region connecting the CUB and growth factor domains) gives rise to the receptor-binding form. Cleaved by PLAT and PLG. Sumoylated by SUMO1. In terms of processing, N-glycosylated. As to expression, mainly expressed in kidney, testis, liver, heart and brain (at protein level). Highly expressed in airway epithelium, interstitial cells and alveolar macrophages in the lung of mice overexpressing IL13. Expressed in the ovaries.

The protein localises to the cytoplasm. It is found in the cytosol. Its subcellular location is the secreted. The protein resides in the nucleus. It localises to the cytoplasmic granule. The protein localises to the cell membrane. Functionally, growth factor that plays an essential role in the regulation of embryonic development, cell proliferation, cell migration, survival and chemotaxis. Potent mitogen and chemoattractant for cells of mesenchymal origin. Required for normal skeleton formation during embryonic development, especially for normal development of the craniofacial skeleton and for normal development of the palate. Required for normal skin morphogenesis during embryonic development. Plays an important role in wound healing, where it appears to be involved in three stages: inflammation, proliferation and remodeling. Plays an important role in angiogenesis and blood vessel development. Involved in fibrotic processes, in which transformation of interstitial fibroblasts into myofibroblasts plus collagen deposition occurs. The CUB domain has mitogenic activity in coronary artery smooth muscle cells, suggesting a role beyond the maintenance of the latency of the PDGF domain. In the nucleus, PDGFC seems to have additional function. This Mus musculus (Mouse) protein is Platelet-derived growth factor C (Pdgfc).